Here is a 125-residue protein sequence, read N- to C-terminus: Holo-[acyl-carrier-protein] synthase (125 aa).

Positions 8 and 57 each coordinate Mg(2+).

It belongs to the P-Pant transferase superfamily. AcpS family. The cofactor is Mg(2+).

The protein localises to the cytoplasm. It catalyses the reaction apo-[ACP] + CoA = holo-[ACP] + adenosine 3',5'-bisphosphate + H(+). Functionally, transfers the 4'-phosphopantetheine moiety from coenzyme A to a Ser of acyl-carrier-protein. This Laribacter hongkongensis (strain HLHK9) protein is Holo-[acyl-carrier-protein] synthase.